A 95-amino-acid polypeptide reads, in one-letter code: Large ribosomal subunit protein uL23 (95 aa).

This sequence belongs to the universal ribosomal protein uL23 family. As to quaternary structure, part of the 50S ribosomal subunit. Contacts protein L29, and trigger factor when it is bound to the ribosome.

One of the early assembly proteins it binds 23S rRNA. One of the proteins that surrounds the polypeptide exit tunnel on the outside of the ribosome. Forms the main docking site for trigger factor binding to the ribosome. This Desulfotalea psychrophila (strain LSv54 / DSM 12343) protein is Large ribosomal subunit protein uL23.